The primary structure comprises 44 residues: Photosystem I reaction center subunit IX (44 aa).

A helical membrane pass occupies residues 7–27 (YLSTAPVLATLWFGSLAGLLI).

It belongs to the PsaJ family.

Its subcellular location is the plastid. It localises to the chloroplast thylakoid membrane. In terms of biological role, may help in the organization of the PsaE and PsaF subunits. The chain is Photosystem I reaction center subunit IX from Cycas taitungensis (Prince sago).